Reading from the N-terminus, the 354-residue chain is 3-isopropylmalate dehydrogenase (354 aa).

76 to 87 (GPRWDSAKERPE) serves as a coordination point for NAD(+). 4 residues coordinate substrate: arginine 94, arginine 104, arginine 130, and aspartate 215. Residues aspartate 215, aspartate 239, and aspartate 243 each coordinate Mg(2+). An NAD(+)-binding site is contributed by 273–285 (GSAPDIAGKNKAN).

The protein belongs to the isocitrate and isopropylmalate dehydrogenases family. LeuB type 1 subfamily. Homodimer. Requires Mg(2+) as cofactor. Mn(2+) serves as cofactor.

The protein resides in the cytoplasm. It carries out the reaction (2R,3S)-3-isopropylmalate + NAD(+) = 4-methyl-2-oxopentanoate + CO2 + NADH. It participates in amino-acid biosynthesis; L-leucine biosynthesis; L-leucine from 3-methyl-2-oxobutanoate: step 3/4. Its function is as follows. Catalyzes the oxidation of 3-carboxy-2-hydroxy-4-methylpentanoate (3-isopropylmalate) to 3-carboxy-4-methyl-2-oxopentanoate. The product decarboxylates to 4-methyl-2 oxopentanoate. This Bacillus cereus (strain ATCC 10987 / NRS 248) protein is 3-isopropylmalate dehydrogenase.